The primary structure comprises 165 residues: 3-isopropylmalate dehydratase small subunit (165 aa).

The protein belongs to the LeuD family. LeuD type 2 subfamily. In terms of assembly, heterodimer of LeuC and LeuD.

The enzyme catalyses (2R,3S)-3-isopropylmalate = (2S)-2-isopropylmalate. Its pathway is amino-acid biosynthesis; L-leucine biosynthesis; L-leucine from 3-methyl-2-oxobutanoate: step 2/4. Its function is as follows. Catalyzes the isomerization between 2-isopropylmalate and 3-isopropylmalate, via the formation of 2-isopropylmaleate. The protein is 3-isopropylmalate dehydratase small subunit of Saccharolobus islandicus (strain Y.G.57.14 / Yellowstone #1) (Sulfolobus islandicus).